Reading from the N-terminus, the 508-residue chain is Photosystem II CP47 reaction center protein (508 aa).

6 helical membrane-spanning segments follow: residues Ser-21–Ser-36, Ile-101–Trp-115, Gly-140–Phe-156, Ile-203–Ser-218, Val-237–Val-252, and Thr-457–Arg-472.

The protein belongs to the PsbB/PsbC family. PsbB subfamily. In terms of assembly, PSII is composed of 1 copy each of membrane proteins PsbA, PsbB, PsbC, PsbD, PsbE, PsbF, PsbH, PsbI, PsbJ, PsbK, PsbL, PsbM, PsbT, PsbX, PsbY, PsbZ, Psb30/Ycf12, at least 3 peripheral proteins of the oxygen-evolving complex and a large number of cofactors. It forms dimeric complexes. It depends on Binds multiple chlorophylls. PSII binds additional chlorophylls, carotenoids and specific lipids. as a cofactor.

The protein localises to the plastid. The protein resides in the chloroplast thylakoid membrane. Functionally, one of the components of the core complex of photosystem II (PSII). It binds chlorophyll and helps catalyze the primary light-induced photochemical processes of PSII. PSII is a light-driven water:plastoquinone oxidoreductase, using light energy to abstract electrons from H(2)O, generating O(2) and a proton gradient subsequently used for ATP formation. This Pinus koraiensis (Korean pine) protein is Photosystem II CP47 reaction center protein.